Reading from the N-terminus, the 439-residue chain is Xaa-Pro dipeptidase (439 aa).

Mn(2+) contacts are provided by D244, D255, H335, E380, and E419.

The protein belongs to the peptidase M24B family. Bacterial-type prolidase subfamily. The cofactor is Mn(2+).

The catalysed reaction is Xaa-L-Pro dipeptide + H2O = an L-alpha-amino acid + L-proline. Its function is as follows. Splits dipeptides with a prolyl residue in the C-terminal position. The chain is Xaa-Pro dipeptidase from Shewanella sp. (strain MR-4).